The chain runs to 906 residues: Eukaryotic translation initiation factor 4 gamma 2 (906 aa).

Residue Met-1 is modified to N-acetylmethionine. A disordered region spans residues 1–71 (MESAIAEGGA…SAANNSANEK (71 aa)). Ser-11 is modified (phosphoserine). The region spanning 78 to 308 (FRKVRGILNK…QDTVELREHH (231 aa)) is the MIF4G domain. Thr-89 is subject to Phosphothreonine. Arg-359 carries the omega-N-methylarginine modification. A Phosphoserine modification is found at Ser-394. The residue at position 430 (Lys-430) is an N6-methyllysine. Ser-442 carries the post-translational modification Phosphoserine. The tract at residues 497 to 540 (PPSAQPPRTQTPPLGQTPQLGLKTNPPLIQEKPAKTSKKPPPSK) is disordered. Polar residues predominate over residues 502 to 515 (PPRTQTPPLGQTPQ). Arg-504 is modified (omega-N-methylarginine). Phosphothreonine is present on residues Thr-507 and Thr-513. Residues 542–665 (ELLKLTEAVV…SISELAQPLE (124 aa)) form the MI domain. A Glycyl lysine isopeptide (Lys-Gly) (interchain with G-Cter in SUMO2) cross-link involves residue Lys-574. The W2 domain occupies 719–903 (EGKGLSFLFP…ETAEEEESEE (185 aa)). The residue at position 901 (Ser-901) is a Phosphoserine.

It belongs to the eukaryotic initiation factor 4G family. As to quaternary structure, interacts with the serine/threonine protein kinases MKNK1 and MKNK2. Binds EIF4A and EIF3. Interacts with MIF4GD. Interacts with DAZAP2. Phosphorylation; hyperphosphorylated during mitosis. As to expression, ubiquitously expressed in all tissues examined.

Functionally, appears to play a role in the switch from cap-dependent to IRES-mediated translation during mitosis, apoptosis and viral infection. Cleaved by some caspases and viral proteases. The protein is Eukaryotic translation initiation factor 4 gamma 2 of Mus musculus (Mouse).